A 339-amino-acid chain; its full sequence is MADLKPYIAKAASGEPLSLGDAKAAFDIMMSGQATPSQIGGFLMALRVRGETVPEIAGAVASMRSRMIPVIAPDDAMDIVGTGGDQSGSYNVSSCTAFVVAGAGVPVAKHGNRALSSRSGAADALAALGINIEADADTIGRSISEAGLGFMFAPMHHSAMRHVSPSRVELGTRTIFNLLGPLSNPASVKRQLVGVFAPQWLEPLAHVLKELGSETAWVVYGDGLDEMTTAGTTQVAALENGQIRTFEITPEEVGLRRCSPAELKGGEAAENAKALLGVLEGKDSAYRDIVLLNSGAALVVAGKAENLKDGIAQAVQSIDSGAALAVLQKVIAVSNDKPA.

5-phospho-alpha-D-ribose 1-diphosphate-binding positions include Gly81, 84-85 (GD), Ser89, 91-94 (NVSS), 109-117 (KHGNRALSS), and Ala121. Gly81 contacts anthranilate. Position 93 (Ser93) interacts with Mg(2+). Asn112 provides a ligand contact to anthranilate. An anthranilate-binding site is contributed by Arg167. 2 residues coordinate Mg(2+): Asp225 and Glu226.

It belongs to the anthranilate phosphoribosyltransferase family. Homodimer. Mg(2+) serves as cofactor.

The catalysed reaction is N-(5-phospho-beta-D-ribosyl)anthranilate + diphosphate = 5-phospho-alpha-D-ribose 1-diphosphate + anthranilate. The protein operates within amino-acid biosynthesis; L-tryptophan biosynthesis; L-tryptophan from chorismate: step 2/5. Functionally, catalyzes the transfer of the phosphoribosyl group of 5-phosphorylribose-1-pyrophosphate (PRPP) to anthranilate to yield N-(5'-phosphoribosyl)-anthranilate (PRA). The polypeptide is Anthranilate phosphoribosyltransferase (Brucella suis biovar 1 (strain 1330)).